The sequence spans 464 residues: Argininosuccinate lyase (464 aa).

The protein belongs to the lyase 1 family. Argininosuccinate lyase subfamily.

It localises to the cytoplasm. It catalyses the reaction 2-(N(omega)-L-arginino)succinate = fumarate + L-arginine. It participates in amino-acid biosynthesis; L-arginine biosynthesis; L-arginine from L-ornithine and carbamoyl phosphate: step 3/3. This chain is Argininosuccinate lyase, found in Chlorobium phaeobacteroides (strain DSM 266 / SMG 266 / 2430).